We begin with the raw amino-acid sequence, 524 residues long: Ribonuclease Y (524 aa).

Residues 2–22 (GIVINLFLIIAASIVFFVVGF) traverse the membrane as a helical segment. A KH domain is found at 214 to 299 (ALSVVHIQSD…KAYQDAKKEI (86 aa)). The HD domain maps to 340–432 (LLQHSREVAM…VDAANIVSLS (93 aa)).

The protein belongs to the RNase Y family.

The protein localises to the cell membrane. In terms of biological role, endoribonuclease that initiates mRNA decay. The protein is Ribonuclease Y of Chlorobaculum tepidum (strain ATCC 49652 / DSM 12025 / NBRC 103806 / TLS) (Chlorobium tepidum).